The sequence spans 98 residues: DNA-binding protein Fis (98 aa).

Positions 74 to 93 form a DNA-binding region, H-T-H motif; sequence QTRAATMLGINRGTLRKKLK.

It belongs to the transcriptional regulatory Fis family. As to quaternary structure, homodimer.

Activates ribosomal RNA transcription. Plays a direct role in upstream activation of rRNA promoters. The polypeptide is DNA-binding protein Fis (Haemophilus ducreyi (strain 35000HP / ATCC 700724)).